We begin with the raw amino-acid sequence, 72 residues long: Arrestin-E (72 aa).

This sequence belongs to the arrestin family. Adrenal, cerebral cortex, heart, hypothalamus, intestine, liver, lung, pituitary, retina and testis.

The polypeptide is Arrestin-E (Ear) (Rattus norvegicus (Rat)).